A 292-amino-acid chain; its full sequence is MSQDVNELSKQPTPDKAEDNAFFPSPYSLSQYTAPKTDFDGVEHKGAYKDGKWKVLMIAAEERYVLLENGKMFSTGNHPVEMLLPLHHLMEAGFDVDVATLSGYPVKLELWAMPTEDEAVISTYNKLKEKLKQPKKLADVIKNELGPDSDYLSVFIPGGHAAVVGISESEDVQQTLDWALDNDRFIVTLCHGPAALLSAGLNREKSPLEGYSVCVFPDSLDEGANIEIGYLPGRLKWLVADLLTKQGLKVVNDDMTGRTLKDRKLLTGDSPLASNELGKLAVNEMLNAIQNK.

A compositionally biased stretch (polar residues) spans 1–12; it reads MSQDVNELSKQP. A disordered region spans residues 1-23; the sequence is MSQDVNELSKQPTPDKAEDNAFF. The active-site Nucleophile is the Cys190.

The protein belongs to the peptidase C56 family. HchA subfamily.

It is found in the cytoplasm. The catalysed reaction is N(omega)-(1-hydroxy-2-oxopropyl)-L-arginyl-[protein] + H2O = lactate + L-arginyl-[protein] + H(+). It carries out the reaction N(6)-(1-hydroxy-2-oxopropyl)-L-lysyl-[protein] + H2O = lactate + L-lysyl-[protein] + H(+). It catalyses the reaction S-(1-hydroxy-2-oxopropyl)-L-cysteinyl-[protein] + H2O = lactate + L-cysteinyl-[protein] + H(+). The enzyme catalyses N(omega)-(1-hydroxy-2-oxoethyl)-L-arginyl-[protein] + H2O = L-arginyl-[protein] + glycolate + H(+). The catalysed reaction is N(6)-(1-hydroxy-2-oxoethyl)-L-lysyl-[protein] + H2O = glycolate + L-lysyl-[protein] + H(+). It carries out the reaction S-(1-hydroxy-2-oxoethyl)-L-cysteinyl-[protein] + H2O = glycolate + L-cysteinyl-[protein] + H(+). It catalyses the reaction N(2)-(1-hydroxy-2-oxopropyl)-dGTP + H2O = lactate + dGTP + H(+). The enzyme catalyses N(2)-(1-hydroxy-2-oxopropyl)-GTP + H2O = lactate + GTP + H(+). The catalysed reaction is N(2)-(1-hydroxy-2-oxopropyl)-GDP + H2O = lactate + GDP + H(+). It carries out the reaction N(2)-(1-hydroxy-2-oxopropyl)-GMP + H2O = lactate + GMP + H(+). It catalyses the reaction N(2)-(1-hydroxy-2-oxoethyl)-dGTP + H2O = dGTP + glycolate + H(+). The enzyme catalyses N(2)-(1-hydroxy-2-oxoethyl)-GTP + H2O = glycolate + GTP + H(+). The catalysed reaction is N(2)-(1-hydroxy-2-oxoethyl)-GDP + H2O = glycolate + GDP + H(+). It carries out the reaction N(2)-(1-hydroxy-2-oxoethyl)-GMP + H2O = glycolate + GMP + H(+). It catalyses the reaction an N(2)-(1-hydroxy-2-oxopropyl)-guanosine in RNA + H2O = a guanosine in RNA + lactate + H(+). The enzyme catalyses an N(2)-(1-hydroxy-2-oxopropyl)-2'-deoxyguanosine in DNA + H2O = a 2'-deoxyguanosine in DNA + lactate + H(+). The catalysed reaction is an N(2)-(1-hydroxy-2-oxoethyl)-guanosine in RNA + H2O = a guanosine in RNA + glycolate + H(+). It carries out the reaction an N(2)-(1-hydroxy-2-oxoethyl)-2'-deoxyguanosine in DNA + H2O = a 2'-deoxyguanosine in DNA + glycolate + H(+). Its function is as follows. Protein and nucleotide deglycase that catalyzes the deglycation of the Maillard adducts formed between amino groups of proteins or nucleotides and reactive carbonyl groups of glyoxals. Thus, functions as a protein deglycase that repairs methylglyoxal- and glyoxal-glycated proteins, and releases repaired proteins and lactate or glycolate, respectively. Deglycates cysteine, arginine and lysine residues in proteins, and thus reactivates these proteins by reversing glycation by glyoxals. Acts on early glycation intermediates (hemithioacetals and aminocarbinols), preventing the formation of Schiff bases and advanced glycation endproducts (AGE). Also functions as a nucleotide deglycase able to repair glycated guanine in the free nucleotide pool (GTP, GDP, GMP, dGTP) and in DNA and RNA. Is thus involved in a major nucleotide repair system named guanine glycation repair (GG repair), dedicated to reversing methylglyoxal and glyoxal damage via nucleotide sanitization and direct nucleic acid repair. Plays an important role in protecting cells from carbonyl stress. The chain is Protein/nucleic acid deglycase HchA from Staphylococcus aureus (strain Mu3 / ATCC 700698).